A 586-amino-acid polypeptide reads, in one-letter code: Axin-like protein pry-1 (586 aa).

The interval 1–135 (METHLGWARS…FIEAFNKMSS (135 aa)) is required for interaction with apr-1. The RGS domain maps to 10–131 (SLEAVLSDRS…GSEEFIEAFN (122 aa)). Disordered stretches follow at residues 137–168 (TADQLPGGSAHHSSHQNTMRRSSGTTSRKSAA), 344–442 (MTDD…DSFA), and 478–501 (TSSLDYKDRRQHRKAPTPKKHSKI). Polar residues-rich tracts occupy residues 151–168 (HQNTMRRSSGTTSRKSAA) and 368–388 (GEGSKNTTLSPTNRAPAQLHN). Residues 421-442 (SQSMCAPSYSSASSSYSRDSFA) show a composition bias toward low complexity. The segment covering 486 to 501 (RRQHRKAPTPKKHSKI) has biased composition (basic residues). The 82-residue stretch at 505-586 (LSNLITISYL…FEGRIAAELR (82 aa)) folds into the DIX domain.

Interacts (via N-terminus) with apr-1 (via C-terminus). Interacts with bar-1 (via ARM repeats), gsk-3, and mig-5. In terms of tissue distribution, expressed in hypodermal cells (seam cells) V5 and V6, Q neuroblasts, ventral hypodermal cells P7/8 to P11/12, body wall muscle cells and neurons in the head, the tail and the ventral nerve cord.

It is found in the cell membrane. It localises to the nucleus. The protein resides in the cytoplasm. The protein localises to the cell cortex. In terms of biological role, works in parallel with axl-1 in negatively regulating bar-1 signaling in vulval precursor cells and Q neuroblasts. Inhibits Wnt signaling, which affects tissue specific expression of Hox genes, egl-5, lin-39 and mab-5. This in turn affects QR (postembryonic neuroblast) cell migration, vulval cell fate specification, and the development of sensory structures by the seam cell lineage. Has a role in alae V cell patterning, ray formation in the male tail and axon guidance. Does not affect B cell polarity. The polypeptide is Axin-like protein pry-1 (Caenorhabditis elegans).